The following is a 289-amino-acid chain: MAHDQLHRYLFENYAVRGELVTVNETYQRILTNHDYPAAVQTLLGEMLVATSLLTATLKFSGDITVQLQGDGPLKLAVINGNHLQQMRGVARLQGDIAPGSSLKEMVGNGYLVITITPTDGERYQGVVGLEGETVAECLESYFQQSEQLPTRLFIRTGQHEGNPVAAGMLLQVLPAQDAERNDFDHLAQLTATVKAEELFTLPANEVLYRLYHQEEVTVYEPQDVEFQCHCSRDRCANALMTLSDQEINEMIEQDGEIDMHCDYCGTHYLFNSLDIRAIRHDSSGNLLH.

2 cysteine pairs are disulfide-bonded: Cys-229-Cys-231 and Cys-262-Cys-265.

Belongs to the HSP33 family. In terms of processing, under oxidizing conditions two disulfide bonds are formed involving the reactive cysteines. Under reducing conditions zinc is bound to the reactive cysteines and the protein is inactive.

It localises to the cytoplasm. In terms of biological role, redox regulated molecular chaperone. Protects both thermally unfolding and oxidatively damaged proteins from irreversible aggregation. Plays an important role in the bacterial defense system toward oxidative stress. In Pectobacterium atrosepticum (strain SCRI 1043 / ATCC BAA-672) (Erwinia carotovora subsp. atroseptica), this protein is 33 kDa chaperonin.